Consider the following 125-residue polypeptide: Gem-associated protein 7 (125 aa).

The residue at position 1 (M1) is an N-acetylmethionine. The SUZ-C domain maps to 1–29; it reads MQTPLATPVPVLRLPRGPDGSNRGFAPDG. Positions 1–52 are disordered; it reads MQTPLATPVPVLRLPRGPDGSNRGFAPDGRRAPPKPEVPEPPESRESWEQQA. T3 carries the phosphothreonine modification. Positions 59-125 constitute a Sm domain; it reads RYLRSLLAMV…SDIISYTFKP (67 aa).

The protein belongs to the gemin-7 family. Part of the core SMN complex that contains SMN1, GEMIN2/SIP1, DDX20/GEMIN3, GEMIN4, GEMIN5, GEMIN6, GEMIN7, GEMIN8 and STRAP/UNRIP. Part of the SMN-Sm complex that contains SMN1, GEMIN2/SIP1, DDX20/GEMIN3, GEMIN4, GEMIN5, GEMIN6, GEMIN7, GEMIN8, STRAP/UNRIP and the Sm proteins SNRPB, SNRPD1, SNRPD2, SNRPD3, SNRPE, SNRPF and SNRPG. Interacts with GEMIN6; the interaction is direct. Interacts with STRAP/UNRIP; the interaction is direct. Interacts with GEMIN8; the interaction is direct. Interacts with SNRPB, SNRPD2, SNRPD3 and SNRPE; the interaction is direct.

Its subcellular location is the nucleus. The protein resides in the nucleoplasm. It localises to the gem. It is found in the cytoplasm. Functionally, the SMN complex catalyzes the assembly of small nuclear ribonucleoproteins (snRNPs), the building blocks of the spliceosome, and thereby plays an important role in the splicing of cellular pre-mRNAs. Most spliceosomal snRNPs contain a common set of Sm proteins SNRPB, SNRPD1, SNRPD2, SNRPD3, SNRPE, SNRPF and SNRPG that assemble in a heptameric protein ring on the Sm site of the small nuclear RNA to form the core snRNP (Sm core). In the cytosol, the Sm proteins SNRPD1, SNRPD2, SNRPE, SNRPF and SNRPG are trapped in an inactive 6S pICln-Sm complex by the chaperone CLNS1A that controls the assembly of the core snRNP. To assemble core snRNPs, the SMN complex accepts the trapped 5Sm proteins from CLNS1A forming an intermediate. Binding of snRNA inside 5Sm triggers eviction of the SMN complex, thereby allowing binding of SNRPD3 and SNRPB to complete assembly of the core snRNP. This is Gem-associated protein 7 (GEMIN7) from Bos taurus (Bovine).